Reading from the N-terminus, the 1194-residue chain is DNA polymerase catalytic subunit (1194 aa).

Belongs to the DNA polymerase type-B family. As to quaternary structure, forms a complex with the ssDNA-binding protein, the DNA polymerase processivity factor, and the alkaline exonuclease. Interacts with the helicase-primase complex composed of the primase, the helicase and the primase-associated factor; this interaction may coordinate leading and lagging strand DNA synthesis at the replication fork.

The protein resides in the host nucleus. The catalysed reaction is DNA(n) + a 2'-deoxyribonucleoside 5'-triphosphate = DNA(n+1) + diphosphate. The enzyme catalyses Endonucleolytic cleavage to 5'-phosphomonoester.. Its function is as follows. Replicates viral genomic DNA. The replication complex is composed of six viral proteins: the DNA polymerase, processivity factor, primase, primase-associated factor, helicase, and ssDNA-binding protein. Additionally, the polymerase contains an intrinsic ribonuclease H (RNase H) activity that specifically degrades RNA/DNA heteroduplexes or duplex DNA substrates in the 5' to 3' direction. Therefore, it can catalyze the excision of the RNA primers that initiate the synthesis of Okazaki fragments at a replication fork during viral DNA replication. The chain is DNA polymerase catalytic subunit from Varicella-zoster virus (strain Oka vaccine) (HHV-3).